A 1018-amino-acid chain; its full sequence is Probable ATP-dependent RNA helicase DDX46 (1018 aa).

Residues 1 to 14 (MGRESRHYRKRSSS) show a composition bias toward basic residues. Positions 1–200 (MGRESRHYRK…EVGEEVDPLD (200 aa)) are disordered. The span at 15–24 (RGRSGSLSKS) shows a compositional bias: low complexity. Basic and acidic residues predominate over residues 25 to 39 (RSPDSKRSKKDDRTA). Basic residues predominate over residues 40–87 (SRTHSRRERSRSRERRRSRERKRQRRSSRDRRRSRSRERRRSKSRSRG). Residues 88-112 (RSKEKPENGDQTADKKKIKEEKEEE) are compositionally biased toward basic and acidic residues. Over residues 113 to 125 (KPEDQDFDQNTLE) the composition is skewed to acidic residues. Over residues 126 to 168 (EEMRKRKERVEKWREEQRKTAMENIGEIKKELEEMKQGKKWSL) the composition is skewed to basic and acidic residues. The span at 169–200 (EDDDEEQDKAAEAEESERMEEEEVGEEVDPLD) shows a compositional bias: acidic residues. The short motif at 340-368 (KTWVQCGISMKVLNALKKHNYEKPTPIQA) is the Q motif element. The Helicase ATP-binding domain maps to 371–549 (IPAIMSGRDL…RRILSKPVEV (179 aa)). 384 to 391 (AKTGSGKT) lines the ATP pocket. A DEAD box motif is present at residues 497-500 (DEAD). The Helicase C-terminal domain occupies 560-721 (DVEQHVIVIE…SVPAELEQLW (162 aa)). Residues 900 to 927 (VEKLEEERQAAEAAETVKRYEEELEIND) are a coiled coil.

Belongs to the DEAD box helicase family. DDX46/PRP5 subfamily. In terms of assembly, component of the 17S U2 SnRNP complex, a ribonucleoprotein complex that contains small nuclear RNA (snRNA) U2 and a number of specific proteins.

The protein localises to the nucleus speckle. The protein resides in the nucleus. It is found in the cajal body. The catalysed reaction is ATP + H2O = ADP + phosphate + H(+). Functionally, component of the 17S U2 SnRNP complex of the spliceosome, a large ribonucleoprotein complex that removes introns from transcribed pre-mRNAs. The 17S U2 SnRNP complex (1) directly participates in early spliceosome assembly and (2) mediates recognition of the intron branch site during pre-mRNA splicing by promoting the selection of the pre-mRNA branch-site adenosine, the nucleophile for the first step of splicing. Within the 17S U2 SnRNP complex, DDX46 plays essential roles during assembly of pre-spliceosome and proofreading of the branch site. The chain is Probable ATP-dependent RNA helicase DDX46 (ddx46) from Danio rerio (Zebrafish).